We begin with the raw amino-acid sequence, 131 residues long: Large ribosomal subunit protein bL19 (131 aa).

It belongs to the bacterial ribosomal protein bL19 family.

This protein is located at the 30S-50S ribosomal subunit interface and may play a role in the structure and function of the aminoacyl-tRNA binding site. The chain is Large ribosomal subunit protein bL19 from Caulobacter sp. (strain K31).